The following is a 157-amino-acid chain: Acetyltransferase PseH (157 aa).

Residues Lys-5–Cys-152 enclose the N-acetyltransferase domain.

Functionally, catalyzes the third step in the biosynthesis of pseudaminic acid, a sialic-acid-like sugar that is used to modify flagellin. Mediates N-4 acetylation of UDP-4-amino-4,6-dideoxy-beta-L-AltNAc to form UDP-2,4-diacetamido-2,4,6-trideoxy-beta-L-altropyranose. The chain is Acetyltransferase PseH (pseH) from Campylobacter jejuni subsp. jejuni serotype O:2 (strain ATCC 700819 / NCTC 11168).